The primary structure comprises 303 residues: N-acetyl-D-glucosamine kinase (303 aa).

ATP contacts are provided by residues 4–11 and 133–140; these read GFDIGGTK and GVGGGLVL. Positions 157, 177, 179, and 184 each coordinate Zn(2+).

It belongs to the ROK (NagC/XylR) family. NagK subfamily.

The enzyme catalyses N-acetyl-D-glucosamine + ATP = N-acetyl-D-glucosamine 6-phosphate + ADP + H(+). It functions in the pathway cell wall biogenesis; peptidoglycan recycling. In terms of biological role, catalyzes the phosphorylation of N-acetyl-D-glucosamine (GlcNAc) derived from cell-wall degradation, yielding GlcNAc-6-P. This Salmonella newport (strain SL254) protein is N-acetyl-D-glucosamine kinase.